The following is a 1200-amino-acid chain: Calcium-activated potassium channel slowpoke (1200 aa).

Residues 1 to 48 (MASGLIDTNFSSTLANGMSGCDQSTVESLADDPTDSPFDADDCLKVRK) are Extracellular-facing. A helical membrane pass occupies residues 49–69 (YWCFLLSSIFTFLAGLLVVLL). Over 70–127 (WRAFAFVCCRKEPDLGPNDPKQKEQKASRNKQEFEGTFMTEAKDWAGELISGQTTTGR) the chain is Cytoplasmic. The chain crosses the membrane as a helical span at residues 128–149 (ILVVLVFILSIASLIIYFVDAS). At 150-164 (SEEVERCQKWSNNIT) the chain is on the extracellular side. A helical transmembrane segment spans residues 165–185 (QQIDLAFNIFFMVYFFIRFIA). The Cytoplasmic segment spans residues 186 to 189 (ASDK). A helical membrane pass occupies residues 190–210 (LWFMLEMYSFVDYFTIPPSFV). The Extracellular portion of the chain corresponds to 211-214 (SIYL). A helical; Voltage-sensor membrane pass occupies residues 215–235 (DRTWIGLRFLRALRLMTVPDI). Residues 236-250 (LQYLNVLKTSSSIRL) are Cytoplasmic-facing. The chain crosses the membrane as a helical span at residues 251 to 271 (AQLVSIFISVWLTAAGIIHLL). Residues 272–284 (ENSGDPLDFNNAH) are Extracellular-facing. Residues 285 to 307 (RLSYWTCVYFLIVTMSTVGYGDV) constitute an intramembrane region (pore-forming). The Selectivity for potassium motif lies at 301-304 (TVGY). The Extracellular segment spans residues 308–316 (YCETVLGRT). A helical transmembrane segment spans residues 317 to 337 (FLVFFLLVGLAMFASSIPEII). The Cytoplasmic segment spans residues 338 to 1200 (ELVGSGNKYG…GGGSNKDDNS (863 aa)). The region spanning 356 to 498 (KRHIVVCGHI…WDWKQGDDVI (143 aa)) is the RCK N-terminal 1 domain. Positions 505 to 525 (LGFIAQSCLAPGFSTMMANLF) are segment S7. Residues 563–583 (IPFAQATELCFSKLKLLLLAI) are segment S8. 2 disordered regions span residues 681-713 (RGSVSGDITRDREDTNLLNRNVRRPNGTGNGTG) and 746-785 (RQVEGQVISPSQYNRPTSRSSGTGTQNQNGGVSLPAGIAD). A compositionally biased stretch (polar residues) spans 746-776 (RQVEGQVISPSQYNRPTSRSSGTGTQNQNGG). Residues 828–848 (VLNGHVVVCLFADPDSPLIGL) form a segment S9 region. The RCK N-terminal 2 domain occupies 830–974 (NGHVVVCLFA…ATAGSPIVLQ (145 aa)). Ser978 carries the post-translational modification Phosphoserine. Residues 988–1010 (TELVNDSNVQFLDQDDDDDPDTE) carry the Calcium bowl motif. The interval 1017–1037 (FACGTAFAVSVLDSLMSTTYF) is segment S10. The segment at 1170–1200 (PPAVRAPAGGRGTNTQGSGVGGGGSNKDDNS) is disordered.

This sequence belongs to the potassium channel family. Calcium-activated (TC 1.A.1.3) subfamily. Slo sub-subfamily. In terms of assembly, homotetramer; which constitutes the calcium-activated potassium channel. Interacts with Slip1. Interacts with Slob, and, indirectly with 14-3-3-zeta via its interaction with Slob. Interacts with Pka-C1 and Src kinases, which can bind simultaneously to it. Post-translationally, phosphorylated. Phosphorylation may be mediated by both PKA and SRC kinases, which activate the channel activity. Phosphorylation by PKA is however unclear. Indeed, although modulation of channel activity requires Pka-C1, it does not interact with the whole PKA holoenzyme. Moreover, modulation of activity does not depend upon phosphorylation of Ser-978. In terms of tissue distribution, expressed in muscle cells, neurons of the CNS and PNS, mushroom bodies, a limited number of cells in embryonic and larval midgut and in epithelial-derived tracheal cells. During pupariation and embryogenesis, it is expressed in muscles many hours prior to the appearance of functional channels.

The protein localises to the membrane. Functionally, potassium channel activated by both membrane depolarization or increase in cytosolic Ca(2+) that mediates export of K(+). Its activation dampens the excitatory events that elevate the cytosolic Ca(2+) concentration and/or depolarize the cell membrane. It therefore contributes to repolarization of the membrane potential. Kinetics are determined by alternative splicing, phosphorylation status and its combination interaction with Slob and 14-3-3-zeta. While the interaction with Slob1 alone increases its activity, its interaction with both Slob1 and 14-3-3-zeta decreases its activity. The chain is Calcium-activated potassium channel slowpoke (slo) from Drosophila melanogaster (Fruit fly).